The primary structure comprises 417 residues: Probable uracil permease (417 aa).

The Cytoplasmic segment spans residues 1 to 13 (MTNQNPPVLLEQN). Residues 14–37 (HAKQAFVGLQMLFVAFGALVLVPL) traverse the membrane as a helical segment. Residues 38-41 (ITGL) lie on the Periplasmic side of the membrane. The chain crosses the membrane as a helical span at residues 42-61 (NANTALLTAGIGTLLFQLCT). Over 62–64 (GRQ) the chain is Cytoplasmic. A discontinuously helical transmembrane segment spans residues 65–81 (VPIFLASSFAFIAPIQY). F73 is a uracil binding site. The Periplasmic portion of the chain corresponds to 83 to 90 (VTTWGIAT). Residues 91–111 (TMGGLVFTGLVYFALSTLVKI) form a helical membrane-spanning segment. Residues 112 to 123 (KGAGALQKVFPP) lie on the Cytoplasmic side of the membrane. The helical transmembrane segment at 124–145 (VVVGPVIIIIGMGLAPVAVDMA) threads the bilayer. Residues 146-154 (LGKNSTYQY) are Periplasmic-facing. A helical membrane pass occupies residues 155–170 (NDAVFVSMATLLTTLG). Over 171 to 177 (VAVFAKG) the chain is Cytoplasmic. A helical membrane pass occupies residues 178–198 (MMKLIPIMFGIVVGYILCLFL). The Periplasmic portion of the chain corresponds to 199–223 (GLINFQPVIDAPWFSVPEITTPEFK). The chain crosses the membrane as a helical span at residues 224 to 247 (LEAILYLLPIAIAPAVEHVGGIMA). E240 is a binding site for uracil. The Cytoplasmic segment spans residues 248-260 (ISSVTGKDFLQKP). A helical membrane pass occupies residues 261–280 (GLHRTLLGDGIATSAASFLG). The discontinuously helical transmembrane segment at 281–297 (GPPNTTYAEVTGAVMLT) threads the bilayer. E289 contributes to the uracil binding site. Topologically, residues 298–300 (RNF) are cytoplasmic. Residues 301–318 (NPKIMTWAAVWAIAISFC) traverse the membrane as a helical segment. The Periplasmic segment spans residues 319–331 (GKVGAFLSTIPTI). A helical membrane pass occupies residues 332 to 353 (VMGGIMMLVFGSIAVVGMSTLI). Topologically, residues 354 to 364 (RGKVDVTEARN) are cytoplasmic. Positions 365 to 400 (LCIISVVMTFGIGGMFVNFGEVSLKGISLCAVVAIL) form an intramembrane region, discontinuously helical. At 401-416 (LNLILPKAKNTPIEEN) the chain is on the cytoplasmic side.

Belongs to the nucleobase:cation symporter-2 (NCS2) (TC 2.A.40) family.

The protein localises to the cell inner membrane. The catalysed reaction is uracil(in) + H(+)(in) = uracil(out) + H(+)(out). In terms of biological role, transport of uracil in the cell. The protein is Probable uracil permease (uraA) of Pasteurella multocida (strain Pm70).